A 120-amino-acid polypeptide reads, in one-letter code: Protein p14.5 (120 aa).

Disordered regions lie at residues 1 to 27 and 80 to 120; these read MADF…LEYD and REFT…HKSK. Residue Ala-2 is modified to N-acetylalanine; by host. The span at 103-120 shows a compositional bias: basic residues; it reads KPKKKKHLFPKLSSHKSK.

Belongs to the asfivirus structural protein p14.5 family. Interacts with the major capsid protein. Interacts with host IRF3; this interaction interferes with the recruitment of IRF3 to TBK1. Acetylated.

Its subcellular location is the virion. In terms of biological role, structural protein required for transport of intracellular particles from the assembly sites to the plasma membrane. Binds to both ssDNA and dsDNA. Suppressed the activation of the cGAS/STING pathway by interfering with the recruitment of IRF3 to TBK1, which in turn suppresses IRF3 phosphorylation, decreasing interferon production. In Ornithodoros (relapsing fever ticks), this protein is Protein p14.5.